The chain runs to 542 residues: Excitatory amino acid transporter 1 (542 aa).

At methionine 1–arginine 47 the chain is on the cytoplasmic side. The helical transmembrane segment at asparagine 48 to leucine 68 threads the bilayer. Residues arginine 69–glutamate 86 are Extracellular-facing. A helical membrane pass occupies residues leucine 87–methionine 108. At alanine 109 to arginine 122 the chain is on the cytoplasmic side. Residues alanine 123–isoleucine 145 traverse the membrane as a helical segment. The Extracellular segment spans residues histidine 146–glycine 236. A helical membrane pass occupies residues serine 237 to methionine 260. Residues lysine 261–glutamate 269 lie on the Cytoplasmic side of the membrane. A helical transmembrane segment spans residues phenylalanine 270–isoleucine 297. Residues alanine 298–threonine 318 lie on the Extracellular side of the membrane. Residues valine 319–valine 340 traverse the membrane as a helical segment. Residues threonine 341 to proline 345 lie on the Cytoplasmic side of the membrane. The discontinuously helical intramembrane region spans tryptophan 346 to leucine 376. Serine 363–serine 365 provides a ligand contact to L-aspartate. Residues glutamate 377–arginine 385 lie on the Cytoplasmic side of the membrane. The helical transmembrane segment at valine 386 to phenylalanine 412 threads the bilayer. Residues glycine 394, threonine 396, and asparagine 398 each contribute to the Na(+) site. Threonine 402 is an L-aspartate binding site. At isoleucine 413–glutamine 425 the chain is on the extracellular side. Residues isoleucine 426–glycine 459 constitute an intramembrane region (discontinuously helical). Position 443–447 (isoleucine 443–glycine 447) interacts with L-aspartate. The Extracellular portion of the chain corresponds to leucine 460–aspartate 472. Residues tryptophan 473–valine 494 form a helical membrane-spanning segment. The L-aspartate site is built by aspartate 476 and asparagine 483. Positions 483 and 487 each coordinate Na(+). At glutamate 495–methionine 542 the chain is on the cytoplasmic side. Residue serine 512 is modified to Phosphoserine.

It belongs to the dicarboxylate/amino acid:cation symporter (DAACS) (TC 2.A.23) family. SLC1A3 subfamily. As to quaternary structure, homotrimer. In terms of processing, glycosylated. Detected in brain. Detected at very much lower levels in heart, lung, placenta and skeletal muscle. Highly expressed in cerebellum, but also found in frontal cortex, hippocampus and basal ganglia.

The protein resides in the cell membrane. It carries out the reaction K(+)(in) + L-glutamate(out) + 3 Na(+)(out) + H(+)(out) = K(+)(out) + L-glutamate(in) + 3 Na(+)(in) + H(+)(in). The enzyme catalyses K(+)(in) + L-aspartate(out) + 3 Na(+)(out) + H(+)(out) = K(+)(out) + L-aspartate(in) + 3 Na(+)(in) + H(+)(in). The catalysed reaction is D-aspartate(out) + K(+)(in) + 3 Na(+)(out) + H(+)(out) = D-aspartate(in) + K(+)(out) + 3 Na(+)(in) + H(+)(in). Sodium-dependent, high-affinity amino acid transporter that mediates the uptake of L-glutamate and also L-aspartate and D-aspartate. Functions as a symporter that transports one amino acid molecule together with two or three Na(+) ions and one proton, in parallel with the counter-transport of one K(+) ion. Mediates Cl(-) flux that is not coupled to amino acid transport; this avoids the accumulation of negative charges due to aspartate and Na(+) symport. Plays a redundant role in the rapid removal of released glutamate from the synaptic cleft, which is essential for terminating the postsynaptic action of glutamate. The chain is Excitatory amino acid transporter 1 from Homo sapiens (Human).